The primary structure comprises 349 residues: Transmembrane protein 59-like (349 aa).

The first 22 residues, 1 to 22, serve as a signal peptide directing secretion; it reads MDSVALMPLLLLLLLQPPPATP. Asn-100 is a glycosylation site (N-linked (GlcNAc...) asparagine). Residues 276–296 form a helical membrane-spanning segment; that stretch reads ILACCLFLSVLVMLWLSCSTL. The short motif at 347 to 349 is the Microbody targeting signal element; the sequence is TKL.

This sequence belongs to the TMEM59 family.

Its subcellular location is the golgi apparatus membrane. Modulates the O-glycosylation and complex N-glycosylation steps occurring during the Golgi maturation of APP. Inhibits APP transport to the cell surface and further shedding. The chain is Transmembrane protein 59-like (TMEM59L) from Bos taurus (Bovine).